Consider the following 356-residue polypeptide: D-alanine--D-alanine ligase (356 aa).

The ATP-grasp domain occupies 146-350; the sequence is KKLLVAEGLP…YAELLDTLIQ (205 aa). ATP is bound at residue 173–228; that stretch reads KERLGLPVFVKPARGGSSIGVSKVSAWEDLEAALTLAYESDDKVLIEPEISGAEVE. The Mg(2+) site is built by Asp305, Glu317, and Asn319.

The protein belongs to the D-alanine--D-alanine ligase family. The cofactor is Mg(2+). Mn(2+) serves as cofactor.

Its subcellular location is the cytoplasm. It catalyses the reaction 2 D-alanine + ATP = D-alanyl-D-alanine + ADP + phosphate + H(+). The protein operates within cell wall biogenesis; peptidoglycan biosynthesis. In terms of biological role, cell wall formation. The protein is D-alanine--D-alanine ligase of Corynebacterium aurimucosum (strain ATCC 700975 / DSM 44827 / CIP 107346 / CN-1) (Corynebacterium nigricans).